The primary structure comprises 529 residues: 3-ketoacyl-CoA synthase 20 (529 aa).

Residues 1–22 (MSHNQNQPHRPVPVHVTNAEPN) form a disordered region. The next 2 helical transmembrane spans lie at 52–72 (LYILLLPLLAATIANLSSFTI) and 84–104 (FHFLSATLATALLISLSTAYF). The FAE domain maps to 103–396 (YFTTRPRRVF…FFATLVARKV (294 aa)). Active-site residues include Cys-247, His-326, His-415, His-419, and Asn-452.

The protein belongs to the thiolase-like superfamily. Chalcone/stilbene synthases family. In terms of tissue distribution, expressed in aerial organs. Expressed in leaves, flowers, siliques and stems. Expressed in roots, young seedlings, leaves, flowers and siliques.

The protein localises to the membrane. It carries out the reaction a very-long-chain acyl-CoA + malonyl-CoA + H(+) = a very-long-chain 3-oxoacyl-CoA + CO2 + CoA. It participates in lipid metabolism; fatty acid biosynthesis. With respect to regulation, inhibited by K3 herbicides such as alachlor, allidochlor, anilofos, cafenstrole, fentrazamide and flufenacet. Strongly inhibited by metazachlor and only slightly by mefluidide. Functionally, mediates the synthesis of VLCFAs from 22 to 26 carbons in length (e.g. C22, C24, C26). Functionally redundant with KCS2 in the two-carbon elongation of C22 fatty acids that is required for cuticular wax and root suberin biosynthesis. This Arabidopsis thaliana (Mouse-ear cress) protein is 3-ketoacyl-CoA synthase 20.